A 238-amino-acid chain; its full sequence is Cysteine-rich venom protein (238 aa).

Positions 1 to 19 are cleaved as a signal peptide; the sequence is MIAFIVLLSLAAVLQQSSG. The region spanning 38-164 is the SCP domain; sequence VDKHNALRRS…STKYLYVCQY (127 aa). Disulfide bonds link C75–C153, C92–C165, C148–C162, C184–C191, C187–C196, C200–C233, C209–C227, and C218–C231. One can recognise a ShKT domain in the interval 200–233; sequence CKYEDAFTNCNELAKETKCKTEWIKSKCPATCFC.

It belongs to the CRISP family. In terms of tissue distribution, expressed by the venom gland.

Its subcellular location is the secreted. In terms of biological role, blocks olfactory (CNGA2) and retinal (CNGA1) CNG channel currents. Does not affect neither depolarization- nor caffeine-induced contraction of smooth muscle. The protein is Cysteine-rich venom protein of Drysdalia coronoides (White-lipped snake).